We begin with the raw amino-acid sequence, 344 residues long: Dihydroorotase (344 aa).

H13 and H15 together coordinate Zn(2+). Residues 15 to 17 and N41 contribute to the substrate site; that span reads HLR. Residues K98, H135, and H173 each contribute to the Zn(2+) site. K98 is modified (N6-carboxylysine). Substrate is bound at residue H135. L218 is a substrate binding site. Position 247 (D247) interacts with Zn(2+). The active site involves D247. Substrate contacts are provided by H251 and A263.

The protein belongs to the metallo-dependent hydrolases superfamily. DHOase family. Class II DHOase subfamily. Homodimer. Zn(2+) is required as a cofactor.

It catalyses the reaction (S)-dihydroorotate + H2O = N-carbamoyl-L-aspartate + H(+). Its pathway is pyrimidine metabolism; UMP biosynthesis via de novo pathway; (S)-dihydroorotate from bicarbonate: step 3/3. Its function is as follows. Catalyzes the reversible cyclization of carbamoyl aspartate to dihydroorotate. The sequence is that of Dihydroorotase from Neisseria gonorrhoeae (strain NCCP11945).